The chain runs to 156 residues: 6,7-dimethyl-8-ribityllumazine synthase (156 aa).

Residues phenylalanine 23, alanine 57 to glutamate 59, and alanine 81 to isoleucine 83 contribute to the 5-amino-6-(D-ribitylamino)uracil site. A (2S)-2-hydroxy-3-oxobutyl phosphate-binding site is contributed by glycine 86–threonine 87. Histidine 89 serves as the catalytic Proton donor. Phenylalanine 114 contributes to the 5-amino-6-(D-ribitylamino)uracil binding site. Position 128 (arginine 128) interacts with (2S)-2-hydroxy-3-oxobutyl phosphate.

The protein belongs to the DMRL synthase family.

The catalysed reaction is (2S)-2-hydroxy-3-oxobutyl phosphate + 5-amino-6-(D-ribitylamino)uracil = 6,7-dimethyl-8-(1-D-ribityl)lumazine + phosphate + 2 H2O + H(+). The protein operates within cofactor biosynthesis; riboflavin biosynthesis; riboflavin from 2-hydroxy-3-oxobutyl phosphate and 5-amino-6-(D-ribitylamino)uracil: step 1/2. In terms of biological role, catalyzes the formation of 6,7-dimethyl-8-ribityllumazine by condensation of 5-amino-6-(D-ribitylamino)uracil with 3,4-dihydroxy-2-butanone 4-phosphate. This is the penultimate step in the biosynthesis of riboflavin. The protein is 6,7-dimethyl-8-ribityllumazine synthase of Helicobacter pylori (strain ATCC 700392 / 26695) (Campylobacter pylori).